The primary structure comprises 684 residues: Chaperone protein HtpG (684 aa).

Residues M1–R329 are a; substrate-binding. The tract at residues S330 to Q548 is b. Positions L549–L684 are c.

It belongs to the heat shock protein 90 family. In terms of assembly, homodimer.

The protein resides in the cytoplasm. Molecular chaperone. Has ATPase activity. This chain is Chaperone protein HtpG, found in Porphyromonas gingivalis (strain ATCC 33277 / DSM 20709 / CIP 103683 / JCM 12257 / NCTC 11834 / 2561).